The chain runs to 93 residues: U12-lycotoxin-Ls1e (93 aa).

The first 18 residues, 1–18 (MKFAVILLFTLVVLAVAS), serve as a signal peptide directing secretion. Positions 19–38 (ESVEEDTREIDVEEFQEQQR) are excised as a propeptide.

The protein belongs to the neurotoxin 31 family. In terms of processing, contains 5 disulfide bonds. As to expression, expressed by the venom gland.

The protein localises to the secreted. The sequence is that of U12-lycotoxin-Ls1e from Lycosa singoriensis (Wolf spider).